A 465-amino-acid polypeptide reads, in one-letter code: DEAD-box ATP-dependent RNA helicase 55 (465 aa).

Positions 17–45 (FSELKPPLSEDIIEALDRSGFEVCTPVQA) match the Q motif motif. Positions 48 to 219 (IPFLCSHKDV…KAGLRNPYLK (172 aa)) constitute a Helicase ATP-binding domain. Residue 61–68 (AATGSGKT) participates in ATP binding. The DEAD box motif lies at 167 to 170 (DEAD). Positions 228–422 (QLVHLLIENK…KDKLQQEKRG (195 aa)) constitute a Helicase C-terminal domain. The disordered stretch occupies residues 413–465 (KDKLQQEKRGKRKKSSKEAVDDSNKASRKRKLTGRQRQTIQTAQDEEEMNLRL). Positions 428-437 (SKEAVDDSNK) are enriched in basic and acidic residues. Residues 456–465 (QDEEEMNLRL) show a composition bias toward acidic residues.

This sequence belongs to the DEAD box helicase family. DDX55/SPB4 subfamily.

It catalyses the reaction ATP + H2O = ADP + phosphate + H(+). The protein is DEAD-box ATP-dependent RNA helicase 55 (RH55) of Arabidopsis thaliana (Mouse-ear cress).